Reading from the N-terminus, the 533-residue chain is MAPKPKPWVQTEGPEKKKGRQAGREEDPFRSTAEALKAIPAEKRIIRVDPTCPLSSNPGTQVYEDYNCTLNQTNIENNNNKFYIIQLLQDSNRFFTCWNRWGRVGEVGQSKINHFTRLEDAKKDFEKKFREKTKNNWAERDHFVSHPGKYTLIEVQAEDEAQEAVVKVDRGPVRTVTKRVQPCSLDPATQKLITNIFSKEMFKNTMALMDLDVKKMPLGKLSKQQIARGFEALEALEEALKGPTDGGQSLEELSSHFYTVIPHNFGHSQPPPINSPELLQAKKDMLLVLADIELAQALQAVSEQEKTVEEVPHPLDRDYQLLKCQLQLLDSGAPEYKVIQTYLEQTGSNHRCPTLQHIWKVNQEGEEDRFQAHSKLGNRKLLWHGTNMAVVAAILTSGLRIMPHSGGRVGKGIYFASENSKSAGYVIGMKCGAHHVGYMFLGEVALGREHHINTDNPSLKSPPPGFDSVIARGHTEPDPTQDTELELDGQQVVVPQGQPVPCPEFSSSTFSQSEYLIYQESQCRLRYLLEVHL.

A disordered region spans residues 1–30 (MAPKPKPWVQTEGPEKKKGRQAGREEDPFR). The residue at position 6 (lysine 6) is an N6-(ADP-ribosyl)lysine. ADP-ribosyl glutamic acid occurs at positions 12, 15, 26, and 34. The Nuclear localization signal motif lies at 14–20 (PEKKKGR). Lysine 37 is subject to N6-(ADP-ribosyl)lysine. Positions 59–150 (GTQVYEDYNC…DHFVSHPGKY (92 aa)) constitute a WGR domain. Aspartate 141 is modified (ADP-ribosyl aspartic acid). Residue glutamate 163 is modified to ADP-ribosyl glutamic acid. The PARP alpha-helical domain maps to 182–300 (PCSLDPATQK…DIELAQALQA (119 aa)). Aspartate 210 is subject to ADP-ribosyl aspartic acid. Glutamate 231, glutamate 309, glutamate 310, glutamate 344, and glutamate 449 each carry ADP-ribosyl glutamic acid. A PARP catalytic domain is found at 313–533 (HPLDRDYQLL…RLRYLLEVHL (221 aa)). Positions 454–482 (TDNPSLKSPPPGFDSVIARGHTEPDPTQD) are disordered.

The protein belongs to the ARTD/PARP family. As to quaternary structure, interacts with PARP1; leading to activate PARP1 in absence of DNA. Interacts with PRKDC. Interacts with XRCC5/Ku80; the interaction is dependent on nucleic acids. Interacts with XRCC6/Ku70; the interaction is dependent on nucleic acids. Interacts with EZH2, HDAC1, HDAC2, SUZ12, YY1, LRIG3 and LIG4. Post-translationally, auto-mono-ADP-ribosylated. In terms of tissue distribution, widely expressed; the highest levels are in the kidney, skeletal muscle, liver, heart and spleen; also detected in pancreas, lung, placenta, brain, leukocytes, colon, small intestine, ovary, testis, prostate and thymus.

Its subcellular location is the nucleus. It localises to the chromosome. It is found in the cytoplasm. The protein localises to the cytoskeleton. The protein resides in the microtubule organizing center. Its subcellular location is the centrosome. It localises to the centriole. It carries out the reaction L-aspartyl-[protein] + NAD(+) = 4-O-(ADP-D-ribosyl)-L-aspartyl-[protein] + nicotinamide. It catalyses the reaction L-glutamyl-[protein] + NAD(+) = 5-O-(ADP-D-ribosyl)-L-glutamyl-[protein] + nicotinamide. The enzyme catalyses L-lysyl-[protein] + NAD(+) = N(6)-(ADP-D-ribosyl)-L-lysyl-[protein] + nicotinamide + H(+). Mono-ADP-ribosyltransferase activity of PARP3 is selectively inhibited by ME0328 compound; ME0328 does not inhibit other ARTD/PARP enzymes, such as PARP1. Mono-ADP-ribosyltransferase is strongly inhibited by KU0058948 compound. Mono-ADP-ribosyltransferase that mediates mono-ADP-ribosylation of target proteins and plays a key role in the response to DNA damage. Mediates mono-ADP-ribosylation of glutamate, aspartate or lysine residues on target proteins. In contrast to PARP1 and PARP2, it is not able to mediate poly-ADP-ribosylation. Involved in DNA repair by mediating mono-ADP-ribosylation of a limited number of acceptor proteins involved in chromatin architecture and in DNA metabolism, such as histone H2B, XRCC5 and XRCC6. ADP-ribosylation follows DNA damage and appears as an obligatory step in a detection/signaling pathway leading to the reparation of DNA strand breaks. Involved in single-strand break repair by catalyzing mono-ADP-ribosylation of histone H2B on 'Glu-2' (H2BE2ADPr) of nucleosomes containing nicked DNA. Cooperates with the XRCC5-XRCC6 (Ku80-Ku70) heterodimer to limit end-resection thereby promoting accurate NHEJ. Suppresses G-quadruplex (G4) structures in response to DNA damage. Associates with a number of DNA repair factors and is involved in the response to exogenous and endogenous DNA strand breaks. Together with APLF, promotes the retention of the LIG4-XRCC4 complex on chromatin and accelerate DNA ligation during non-homologous end-joining (NHEJ). May link the DNA damage surveillance network to the mitotic fidelity checkpoint. Acts as a negative regulator of immunoglobulin class switch recombination, probably by controlling the level of AICDA /AID on the chromatin. In addition to proteins, also able to ADP-ribosylate DNA: mediates DNA mono-ADP-ribosylation of DNA strand break termini via covalent addition of a single ADP-ribose moiety to a 5'- or 3'-terminal phosphate residues in DNA containing multiple strand breaks. This is Protein mono-ADP-ribosyltransferase PARP3 from Homo sapiens (Human).